The sequence spans 77 residues: Small ribosomal subunit protein bS18 (77 aa).

It belongs to the bacterial ribosomal protein bS18 family. Part of the 30S ribosomal subunit. Forms a tight heterodimer with protein bS6.

Its function is as follows. Binds as a heterodimer with protein bS6 to the central domain of the 16S rRNA, where it helps stabilize the platform of the 30S subunit. The protein is Small ribosomal subunit protein bS18 of Bacillus thuringiensis subsp. konkukian (strain 97-27).